Consider the following 82-residue polypeptide: Large ribosomal subunit protein uL23 (82 aa).

Belongs to the universal ribosomal protein uL23 family. Part of the 50S ribosomal subunit. Contacts protein L29.

Binds to 23S rRNA. One of the proteins that surrounds the polypeptide exit tunnel on the outside of the ribosome. This Methanosarcina acetivorans (strain ATCC 35395 / DSM 2834 / JCM 12185 / C2A) protein is Large ribosomal subunit protein uL23.